Reading from the N-terminus, the 154-residue chain is 17.7 kDa class I heat shock protein (154 aa).

Positions 40–154 (ETSAFANTRI…PDVKSIEISG (115 aa)) constitute a sHSP domain.

This sequence belongs to the small heat shock protein (HSP20) family. In terms of assembly, forms oligomeric structures.

The protein resides in the cytoplasm. This is 17.7 kDa class I heat shock protein from Solanum peruvianum (Peruvian tomato).